The sequence spans 116 residues: Flagellar transcriptional regulator FlhD (116 aa).

This sequence belongs to the FlhD family. Homodimer; disulfide-linked. Forms a heterohexamer composed of two FlhC and four FlhD subunits. Each FlhC binds a FlhD dimer, forming a heterotrimer, and a hexamer assembles by dimerization of two heterotrimers.

Its subcellular location is the cytoplasm. Functions in complex with FlhC as a master transcriptional regulator that regulates transcription of several flagellar and non-flagellar operons by binding to their promoter region. Activates expression of class 2 flagellar genes, including fliA, which is a flagellum-specific sigma factor that turns on the class 3 genes. Also regulates genes whose products function in a variety of physiological pathways. This chain is Flagellar transcriptional regulator FlhD, found in Salmonella arizonae (strain ATCC BAA-731 / CDC346-86 / RSK2980).